Consider the following 113-residue polypeptide: Hydrogenase maturation factor HypA (113 aa).

Residue His2 participates in Ni(2+) binding. The Zn(2+) site is built by Cys73, Cys76, Cys89, and Cys92.

This sequence belongs to the HypA/HybF family.

Its function is as follows. Involved in the maturation of [NiFe] hydrogenases. Required for nickel insertion into the metal center of the hydrogenase. The polypeptide is Hydrogenase maturation factor HypA (Rhizobium leguminosarum bv. viciae).